Reading from the N-terminus, the 100-residue chain is Aspartyl/glutamyl-tRNA(Asn/Gln) amidotransferase subunit C (100 aa).

Belongs to the GatC family. As to quaternary structure, heterotrimer of A, B and C subunits.

It catalyses the reaction L-glutamyl-tRNA(Gln) + L-glutamine + ATP + H2O = L-glutaminyl-tRNA(Gln) + L-glutamate + ADP + phosphate + H(+). It carries out the reaction L-aspartyl-tRNA(Asn) + L-glutamine + ATP + H2O = L-asparaginyl-tRNA(Asn) + L-glutamate + ADP + phosphate + 2 H(+). Functionally, allows the formation of correctly charged Asn-tRNA(Asn) or Gln-tRNA(Gln) through the transamidation of misacylated Asp-tRNA(Asn) or Glu-tRNA(Gln) in organisms which lack either or both of asparaginyl-tRNA or glutaminyl-tRNA synthetases. The reaction takes place in the presence of glutamine and ATP through an activated phospho-Asp-tRNA(Asn) or phospho-Glu-tRNA(Gln). This Streptococcus pyogenes serotype M18 (strain MGAS8232) protein is Aspartyl/glutamyl-tRNA(Asn/Gln) amidotransferase subunit C.